The following is a 512-amino-acid chain: Bifunctional pantoate ligase/cytidylate kinase (512 aa).

The segment at 1 to 276 (MKLQTSADLQ…CGEARLIDHR (276 aa)) is pantoate--beta-alanine ligase. An ATP-binding site is contributed by 27–34 (MGALHQGH). His34 (proton donor) is an active-site residue. Position 58 (Gln58) interacts with (R)-pantoate. Residue Gln58 participates in beta-alanine binding. 147–150 (GEKD) contributes to the ATP binding site. Gln153 contacts (R)-pantoate. Residues Leu176 and 184 to 187 (LSSR) contribute to the ATP site. The cytidylate kinase stretch occupies residues 277–512 (VLMSRLPILA…VPVEALNADA (236 aa)).

In the N-terminal section; belongs to the pantothenate synthetase family. The protein in the C-terminal section; belongs to the cytidylate kinase family. Type 1 subfamily.

Its subcellular location is the cytoplasm. The catalysed reaction is (R)-pantoate + beta-alanine + ATP = (R)-pantothenate + AMP + diphosphate + H(+). It catalyses the reaction CMP + ATP = CDP + ADP. The enzyme catalyses dCMP + ATP = dCDP + ADP. The protein operates within cofactor biosynthesis; (R)-pantothenate biosynthesis; (R)-pantothenate from (R)-pantoate and beta-alanine: step 1/1. In terms of biological role, catalyzes the condensation of pantoate with beta-alanine in an ATP-dependent reaction via a pantoyl-adenylate intermediate. Functionally, catalyzes the transfer of a phosphate group from ATP to either CMP or dCMP to form CDP or dCDP and ADP, respectively. The chain is Bifunctional pantoate ligase/cytidylate kinase from Synechococcus sp. (strain RCC307).